Reading from the N-terminus, the 161-residue chain is Urease accessory protein UreE (161 aa).

The protein belongs to the UreE family.

Its subcellular location is the cytoplasm. In terms of biological role, involved in urease metallocenter assembly. Binds nickel. Probably functions as a nickel donor during metallocenter assembly. The sequence is that of Urease accessory protein UreE from Arthrobacter sp. (strain FB24).